The primary structure comprises 398 residues: Bifunctional enzyme IspD/IspF (398 aa).

Residues 1 to 234 (MTNSPRTAAI…SRLMAALGDI (234 aa)) are 2-C-methyl-D-erythritol 4-phosphate cytidylyltransferase. Residues 235 to 398 (RTGTGYDVHA…LPWGADGLAG (164 aa)) form a 2-C-methyl-D-erythritol 2,4-cyclodiphosphate synthase region. Residues D241 and H243 each contribute to the a divalent metal cation site. Residues 241 to 243 (DVH) and 267 to 268 (HS) contribute to the 4-CDP-2-C-methyl-D-erythritol 2-phosphate site. H275 serves as a coordination point for a divalent metal cation. Residues 289-291 (DIG), 365-368 (TTSE), F372, and R375 contribute to the 4-CDP-2-C-methyl-D-erythritol 2-phosphate site.

The protein in the N-terminal section; belongs to the IspD/TarI cytidylyltransferase family. IspD subfamily. This sequence in the C-terminal section; belongs to the IspF family. Requires a divalent metal cation as cofactor.

The catalysed reaction is 2-C-methyl-D-erythritol 4-phosphate + CTP + H(+) = 4-CDP-2-C-methyl-D-erythritol + diphosphate. It catalyses the reaction 4-CDP-2-C-methyl-D-erythritol 2-phosphate = 2-C-methyl-D-erythritol 2,4-cyclic diphosphate + CMP. It participates in isoprenoid biosynthesis; isopentenyl diphosphate biosynthesis via DXP pathway; isopentenyl diphosphate from 1-deoxy-D-xylulose 5-phosphate: step 2/6. It functions in the pathway isoprenoid biosynthesis; isopentenyl diphosphate biosynthesis via DXP pathway; isopentenyl diphosphate from 1-deoxy-D-xylulose 5-phosphate: step 4/6. Its function is as follows. Bifunctional enzyme that catalyzes the formation of 4-diphosphocytidyl-2-C-methyl-D-erythritol from CTP and 2-C-methyl-D-erythritol 4-phosphate (MEP) (IspD), and catalyzes the conversion of 4-diphosphocytidyl-2-C-methyl-D-erythritol 2-phosphate (CDP-ME2P) to 2-C-methyl-D-erythritol 2,4-cyclodiphosphate (ME-CPP) with a corresponding release of cytidine 5-monophosphate (CMP) (IspF). The chain is Bifunctional enzyme IspD/IspF from Rhodopseudomonas palustris (strain TIE-1).